Reading from the N-terminus, the 304-residue chain is MTKNPSSDATLPKGIHRSWKLPDKSLGDLWDSIVMDEAIKKQLLSQAIVNFTVRPKVERTVLPLHGVILLVGPPGTGKTSLARGLAHRVAESFSSAKFRLLEVEPHTLTSSAMGKTQRAVADLFSQSIAESAAAGPTIVLLDEVETLAADRAKLSLEANPVDVHRATDAVLVQLDMLAERNPHLLFVATSNFPQAVDSAFLSRCDMVMEVPLPGKDACKQILVDCLNGLAKTFPGIGKLSSAHQFDVCAGECVGLDGRAIRKVVANALAADPQVAIDPNKLSVEHLRSAIRQAKQMRLQGGKQK.

75 to 80 (GTGKTS) is an ATP binding site.

This sequence belongs to the AAA ATPase family. As to quaternary structure, oligomerizes. Homohexamer. Forms a 1:1:6 CdnD:Cap7:Cap6 complex.

Its function is as follows. Regulates complex assembly in a CBASS antivirus system. CBASS (cyclic oligonucleotide-based antiphage signaling system) provides immunity against bacteriophage. The CD-NTase protein synthesizes cyclic nucleotides in response to infection; these serve as specific second messenger signals. The signals activate a diverse range of effectors, leading to bacterial cell death and thus abortive phage infection. A type III-C(AAA) CBASS system. In terms of biological role, prevents the CdnD:Cap7:Cap8 complex (also called CdnD:HORMA2:HORMA3) from synthesizing 2',3',3'-cyclic AMP-AMP-AMP (cAAA). Binds and disassembles an active CdnD:Cap7:Cap8 complex, inhibiting the complex's ability to synthesize cyclic nucleotide second messengers. An AAA+-ATPase remodeler, in the absence of foreign threat Cap6 probably maintains the Cap7 protein in an open, inactive state. Once activated (presumably by a bacteriophage protein) Cap7 binds to and activates its cognate CD-NTase (CdnD in this bacteria) to synthesize cAAA, a cyclic nucleotide second messenger. cAAA activates the NucC endonuclease which degrades all DNA in the infected cell, causing cell death and abortive phage infection. The protein is CD-NTase-associated protein 6 of Pseudomonas aeruginosa.